Here is a 550-residue protein sequence, read N- to C-terminus: Arginine--tRNA ligase (550 aa).

Positions 130-140 match the 'HIGH' region motif; it reads ANPTGPIHIGG.

The protein belongs to the class-I aminoacyl-tRNA synthetase family. In terms of assembly, monomer.

The protein resides in the cytoplasm. It carries out the reaction tRNA(Arg) + L-arginine + ATP = L-arginyl-tRNA(Arg) + AMP + diphosphate. This chain is Arginine--tRNA ligase, found in Mycobacterium sp. (strain KMS).